A 248-amino-acid polypeptide reads, in one-letter code: Probable transcriptional regulatory protein PSPA7_4544 (248 aa).

It belongs to the TACO1 family.

The protein resides in the cytoplasm. This chain is Probable transcriptional regulatory protein PSPA7_4544, found in Pseudomonas paraeruginosa (strain DSM 24068 / PA7) (Pseudomonas aeruginosa (strain PA7)).